The chain runs to 834 residues: Glycerol-3-phosphate acyltransferase (834 aa).

The HXXXXD motif signature appears at 309–314; it reads CHRSHI.

Belongs to the GPAT/DAPAT family.

It is found in the cell inner membrane. The enzyme catalyses sn-glycerol 3-phosphate + an acyl-CoA = a 1-acyl-sn-glycero-3-phosphate + CoA. It functions in the pathway phospholipid metabolism; CDP-diacylglycerol biosynthesis; CDP-diacylglycerol from sn-glycerol 3-phosphate: step 1/3. This is Glycerol-3-phosphate acyltransferase from Pseudomonas aeruginosa (strain UCBPP-PA14).